The chain runs to 533 residues: NAD(P)H-quinone oxidoreductase chain 4 (533 aa).

A run of 15 helical transmembrane segments spans residues 5–25, 36–56, 70–90, 91–111, 115–135, 137–157, 169–189, 210–230, 244–264, 278–298, 315–335, 336–356, 377–397, 418–438, and 465–485; these read VPWLSLSILVPIVGALLVPLV, WYALIVTLITFLITVAAYLTG, VSWLPDLGLTWAVGADGLSMP, LILLTSFITSLACLAAWPVSF, LFYFLLLAMDGGQIAVFAVQD, LLFFLAWELELIPVYLLLAIW, FILYTAGSSLFILLAALAMGF, GFQLLCYAGLLIAFGVKLPIV, TAPVHMLLAGILLKMGGYALL, FAPLLIVLGVVNIIYAALTSF, MGFVLIGVGSFSALGTSGAML, QMISHGLIGASLFFLVGATYD, FALWTVCALASLALPGMSGFV, VVICGLAAVGVILTPIYLLSM, and VYIIGCLLVPIIGIGLYPKLM.

This sequence belongs to the complex I subunit 4 family.

The protein resides in the cellular thylakoid membrane. It carries out the reaction a plastoquinone + NADH + (n+1) H(+)(in) = a plastoquinol + NAD(+) + n H(+)(out). The catalysed reaction is a plastoquinone + NADPH + (n+1) H(+)(in) = a plastoquinol + NADP(+) + n H(+)(out). NDH-1 shuttles electrons from NAD(P)H, via FMN and iron-sulfur (Fe-S) centers, to quinones in the respiratory chain. The immediate electron acceptor for the enzyme in this species is believed to be plastoquinone. Couples the redox reaction to proton translocation (for every two electrons transferred, four hydrogen ions are translocated across the cytoplasmic membrane), and thus conserves the redox energy in a proton gradient. In Synechococcus sp. (strain CC9605), this protein is NAD(P)H-quinone oxidoreductase chain 4.